Reading from the N-terminus, the 607-residue chain is UvrABC system protein C (607 aa).

The 80-residue stretch at 14 to 93 (HKPGVYLMLD…IKKHKPRYNI (80 aa)) folds into the GIY-YIG domain. In terms of domain architecture, UVR spans 203 to 238 (RDLLAELKRQMLQASERLNFEQAGQFRDQIRALKTT).

Belongs to the UvrC family. Interacts with UvrB in an incision complex.

Its subcellular location is the cytoplasm. Its function is as follows. The UvrABC repair system catalyzes the recognition and processing of DNA lesions. UvrC both incises the 5' and 3' sides of the lesion. The N-terminal half is responsible for the 3' incision and the C-terminal half is responsible for the 5' incision. The polypeptide is UvrABC system protein C (Desulfotalea psychrophila (strain LSv54 / DSM 12343)).